The following is a 629-amino-acid chain: MTIRLLPPVLVNRIAAGEVVERPASAVKELVENAIDAGASRIDITMTDGGRARILVVDDGRGMDPGELSLAVERHATSKLPGDDLLDIHTLGFRGEALPSIGSVARLTLTSRAAGAGDAWALTVEGGAKGEPEPASHPQGTRVEVRDLFYATPARLKFLKAPRTEQMHAVDVVHRLAMAHPAVGFTLSDGTRQQIRLSGAQGELFEARLTRLGAILGREFSDNAIAIEAEREGIRLTGHAALPTYNKATSAGQYLFVNGRPVRDKLLHGAVRGAYQDVLAHDRNAVLALYLDLPPEMVDVNVHPAKAEVRFRDPGLVRGLIIGALRHALAAAGHRASSTVSLAALGALRPAQGSGAPALPWGAGGYGGGASHPGLEERRSAYAAQAPAGTPDPWAGRGMGAGGGSGQAAMAWLAGAPPAAPRLAGEPEAPPTGAEDFPLGAARGQIHDTYIIAQTRDGVVIVDQHAAHERLVMERMKAALAERGEVARQILLLPEVVELDEPGAVRVATAAAELAKLGLVVEGFGPGAVVVREVPALLGDTDVKGLVADLAEGLAEWGTAQALEDRLGDVVATMACHGSVRAGRRLRIEEMNALLRDMERTPRAGQCNHGRPTYVELRLGDIERLFGRR.

The protein belongs to the DNA mismatch repair MutL/HexB family.

This protein is involved in the repair of mismatches in DNA. It is required for dam-dependent methyl-directed DNA mismatch repair. May act as a 'molecular matchmaker', a protein that promotes the formation of a stable complex between two or more DNA-binding proteins in an ATP-dependent manner without itself being part of a final effector complex. The sequence is that of DNA mismatch repair protein MutL from Rhodospirillum rubrum (strain ATCC 11170 / ATH 1.1.1 / DSM 467 / LMG 4362 / NCIMB 8255 / S1).